Consider the following 177-residue polypeptide: Large ribosomal subunit protein uL6 (177 aa).

The protein belongs to the universal ribosomal protein uL6 family. Part of the 50S ribosomal subunit.

In terms of biological role, this protein binds to the 23S rRNA, and is important in its secondary structure. It is located near the subunit interface in the base of the L7/L12 stalk, and near the tRNA binding site of the peptidyltransferase center. This is Large ribosomal subunit protein uL6 from Alteromonas mediterranea (strain DSM 17117 / CIP 110805 / LMG 28347 / Deep ecotype).